Here is a 193-residue protein sequence, read N- to C-terminus: MNIPIPYVMEQTRYGERSYDIYSRLLKDRIIFIGDEITDTLANSVTAQLLFLASTDPEKDISIYINSPGGSVSAGFAILDTMLYIKPDIQTICTGMAASFAAVLLVGGTKGKRCALPHAEVMIHQPHGGMKGQASDMDIYAQRILKQRKEINHFIAERTGQTPDKIATDSERDYFMSAAEAKDYGVIDNILPV.

The Nucleophile role is filled by Ser99. Residue His124 is part of the active site.

This sequence belongs to the peptidase S14 family. In terms of assembly, fourteen ClpP subunits assemble into 2 heptameric rings which stack back to back to give a disk-like structure with a central cavity, resembling the structure of eukaryotic proteasomes.

Its subcellular location is the cytoplasm. The enzyme catalyses Hydrolysis of proteins to small peptides in the presence of ATP and magnesium. alpha-casein is the usual test substrate. In the absence of ATP, only oligopeptides shorter than five residues are hydrolyzed (such as succinyl-Leu-Tyr-|-NHMec, and Leu-Tyr-Leu-|-Tyr-Trp, in which cleavage of the -Tyr-|-Leu- and -Tyr-|-Trp bonds also occurs).. Its function is as follows. Cleaves peptides in various proteins in a process that requires ATP hydrolysis. Has a chymotrypsin-like activity. Plays a major role in the degradation of misfolded proteins. This Shouchella clausii (strain KSM-K16) (Alkalihalobacillus clausii) protein is ATP-dependent Clp protease proteolytic subunit 1.